The sequence spans 426 residues: Metacaspase-1B (426 aa).

Residues 1–14 (MSGYPGAGYNGGGY) show a composition bias toward gly residues. The segment at 1-111 (MSGYPGAGYN…QAPPPPPQAP (111 aa)) is disordered. The segment covering 21–68 (QYGGYYPPQPAYNAYQQPPPQQQQYMVYHQPSPGPQQHQHWNPQQQTP) has biased composition (low complexity). Active-site residues include H217 and C273.

Belongs to the peptidase C14B family.

In terms of biological role, involved in cell death (apoptosis). The polypeptide is Metacaspase-1B (casB) (Neurospora crassa (strain ATCC 24698 / 74-OR23-1A / CBS 708.71 / DSM 1257 / FGSC 987)).